The sequence spans 653 residues: Epithelial sodium channel subunit gamma (653 aa).

Residues M1–L55 lie on the Cytoplasmic side of the membrane. A helical transmembrane segment spans residues W56 to F76. Residues S77–Q538 lie on the Extracellular side of the membrane. Cystine bridges form between C100–C287, C211–C218, C264–C271, C376–C461, C398–C457, C402–C453, C411–C438, and C413–C427. Residues R137–S225 form a gating release of inhibition by proteolysis (GRIP); protease-sensitive region that is responsible for the proteolytic activation of the channel region. N-linked (GlcNAc...) asparagine glycosylation occurs at N213. N275 carries N-linked (GlcNAc...) asparagine glycosylation. The N-linked (GlcNAc...) asparagine glycan is linked to N501. Residues L539–I559 traverse the membrane as a helical segment. At D560–P653 the chain is on the cytoplasmic side. The disordered stretch occupies residues A582–N632. Positions P627 to Y631 match the PY motif; recruits WW domain-containing proteins and is thereby required for ubiquitination and inhibition of the channel by NEDD4 and NEDD4L motif.

Belongs to the amiloride-sensitive sodium channel (TC 1.A.6) family. SCNN1G subfamily. Component of the heterotrimeric epithelial sodium channel (ENaC) composed of an alpha/SCNN1A, a beta/SCNN1B and a gamma/SCNN1G subunit. Interacts with WWP1 (via WW domains). Interacts with WWP2 (via WW domains); inhibits the channel. Interacts with the full-length immature form of PCSK9 (pro-PCSK9); inhibits ENaC by promoting its proteasomal degradation. Interacts with BPIFA1; the interaction is indirect via SCNN1B and inhibits the proteolytic maturation of SCNN1A and SCNN1G and the activation of ENaC. Phosphorylated on serine and threonine residues. Aldosterone and insulin increase the basal level of phosphorylation. In terms of processing, ubiquitinated. Can be ubiquitinated at multiple sites and undergo monoubiquitination and polyubiquitination. Ubiquitination by NEDD4 or NEDD4L inhibits the ENaC channel through endocytosis, intracellular retention and degradation of its individual subunits. Post-translationally, ENaC is activated through the proteolytic maturation of its subunits. Furin cleaves the SCNN1G subunit first, followed by cleavage by prostasin (PRSS8), which results in a stepwise increase in the open probability of the channel due to the release of an inhibitory tract. BPIFA1, which is recruited by the SCNN1B subunit, prevents the proteolytic activation of ENaC. N-glycosylated. N-linked glycans are processed to complex type during ENaC complex assembly and transport to the plasma membrane.

The protein localises to the apical cell membrane. The catalysed reaction is Na(+)(in) = Na(+)(out). With respect to regulation, originally identified and characterized by its inhibition by the diuretic drug amiloride. Functionally, this is one of the three pore-forming subunits of the heterotrimeric epithelial sodium channel (ENaC), a critical regulator of sodium balance and fluid homeostasis. ENaC operates in epithelial tissues, where it mediates the electrodiffusion of sodium ions from extracellular fluid through the apical membrane of cells, with water following osmotically. It plays a key role in maintaining sodium homeostasis through electrogenic sodium reabsorption in the kidneys. Additionally, ENaC is essential for airway surface liquid homeostasis, which is crucial for proper mucus clearance. The sequence is that of Epithelial sodium channel subunit gamma from Oryctolagus cuniculus (Rabbit).